Reading from the N-terminus, the 322-residue chain is DNA-directed RNA polymerase subunit alpha (322 aa).

The segment at 1-229 (MNFVNNLFTL…KYFDLIFSFI (229 aa)) is alpha N-terminal domain (alpha-NTD). The interval 244–322 (NLNLKINSVY…NLNSKIEYDL (79 aa)) is alpha C-terminal domain (alpha-CTD).

It belongs to the RNA polymerase alpha chain family. Homodimer. The RNAP catalytic core consists of 2 alpha, 1 beta, 1 beta' and 1 omega subunit. When a sigma factor is associated with the core the holoenzyme is formed, which can initiate transcription.

It carries out the reaction RNA(n) + a ribonucleoside 5'-triphosphate = RNA(n+1) + diphosphate. Its function is as follows. DNA-dependent RNA polymerase catalyzes the transcription of DNA into RNA using the four ribonucleoside triphosphates as substrates. The polypeptide is DNA-directed RNA polymerase subunit alpha (rpoA) (Carsonella ruddii (strain PV)).